Consider the following 770-residue polypeptide: U3 small nucleolar RNA-associated protein 14 homolog A (770 aa).

Polar residues predominate over residues 1 to 17 (MNANQAAESNLLASNQQ). The tract at residues 1-65 (MNANQAAESN…GKDRQKLADR (65 aa)) is disordered. Phosphoserine is present on residues serine 30, serine 32, and serine 53. Residues 41–68 (ERKHQKLLESISSLNGKDRQKLADRSEA) are a coiled coil. The span at 56 to 65 (GKDRQKLADR) shows a compositional bias: basic and acidic residues. Phosphoserine occurs at positions 78 and 82. Threonine 206 is modified (phosphothreonine). 2 coiled-coil regions span residues 217 to 291 (SLEE…DKAR) and 318 to 348 (LEAR…EEEG). 3 disordered regions span residues 334-361 (LTQK…LVPD), 392-455 (KDLE…SSQE), and 467-505 (LRTE…RPER). Composition is skewed to acidic residues over residues 343 to 358 (ESEE…EEPL) and 396 to 410 (DPAE…ESEE). Residues serine 406 and serine 408 each carry the phosphoserine modification. Positions 411–444 (EKAVVEEETLLKEFEERRSLRQKSELNHMAEPVH) are enriched in basic and acidic residues. Lysine 449 is covalently cross-linked (Glycyl lysine isopeptide (Lys-Gly) (interchain with G-Cter in SUMO2)). Phosphoserine is present on serine 453. Serine 567 is modified (phosphoserine). Residue arginine 588 is modified to Citrulline. A Glycyl lysine isopeptide (Lys-Gly) (interchain with G-Cter in SUMO2) cross-link involves residue lysine 732.

Belongs to the UTP14 family. Interacts with DHX37. Citrullinated by PADI4.

It is found in the nucleus. The protein resides in the nucleolus. Functionally, may be required for ribosome biogenesis. The polypeptide is U3 small nucleolar RNA-associated protein 14 homolog A (UTP14A) (Bos taurus (Bovine)).